A 210-amino-acid polypeptide reads, in one-letter code: Leucyl/phenylalanyl-tRNA--protein transferase (210 aa).

This sequence belongs to the L/F-transferase family.

It is found in the cytoplasm. The catalysed reaction is N-terminal L-lysyl-[protein] + L-leucyl-tRNA(Leu) = N-terminal L-leucyl-L-lysyl-[protein] + tRNA(Leu) + H(+). The enzyme catalyses N-terminal L-arginyl-[protein] + L-leucyl-tRNA(Leu) = N-terminal L-leucyl-L-arginyl-[protein] + tRNA(Leu) + H(+). It carries out the reaction L-phenylalanyl-tRNA(Phe) + an N-terminal L-alpha-aminoacyl-[protein] = an N-terminal L-phenylalanyl-L-alpha-aminoacyl-[protein] + tRNA(Phe). Functionally, functions in the N-end rule pathway of protein degradation where it conjugates Leu, Phe and, less efficiently, Met from aminoacyl-tRNAs to the N-termini of proteins containing an N-terminal arginine or lysine. This Deinococcus radiodurans (strain ATCC 13939 / DSM 20539 / JCM 16871 / CCUG 27074 / LMG 4051 / NBRC 15346 / NCIMB 9279 / VKM B-1422 / R1) protein is Leucyl/phenylalanyl-tRNA--protein transferase.